We begin with the raw amino-acid sequence, 163 residues long: Nucleotide-binding protein Noca_0564 (163 aa).

Belongs to the YajQ family.

Its function is as follows. Nucleotide-binding protein. This Nocardioides sp. (strain ATCC BAA-499 / JS614) protein is Nucleotide-binding protein Noca_0564.